Here is a 383-residue protein sequence, read N- to C-terminus: Chorismate synthase (383 aa).

NADP(+)-binding residues include Arg40 and Arg46. FMN is bound by residues 128–130 (RAS), Gly291, 306–310 (KPIPT), and Arg332.

The protein belongs to the chorismate synthase family. As to quaternary structure, homotetramer. Requires FMNH2 as cofactor.

The catalysed reaction is 5-O-(1-carboxyvinyl)-3-phosphoshikimate = chorismate + phosphate. The protein operates within metabolic intermediate biosynthesis; chorismate biosynthesis; chorismate from D-erythrose 4-phosphate and phosphoenolpyruvate: step 7/7. Functionally, catalyzes the anti-1,4-elimination of the C-3 phosphate and the C-6 proR hydrogen from 5-enolpyruvylshikimate-3-phosphate (EPSP) to yield chorismate, which is the branch point compound that serves as the starting substrate for the three terminal pathways of aromatic amino acid biosynthesis. This reaction introduces a second double bond into the aromatic ring system. This Moorella thermoacetica (strain ATCC 39073 / JCM 9320) protein is Chorismate synthase.